We begin with the raw amino-acid sequence, 160 residues long: Allophycocyanin alpha chain (160 aa).

N4-methylasparagine is present on Asn70. Cys80 provides a ligand contact to (2R,3E)-phycocyanobilin.

It belongs to the phycobiliprotein family. As to quaternary structure, component of the phycobilisome. Heterodimer of an alpha and a beta chain. In terms of processing, contains one covalently linked phycocyanobilin chromophore.

The protein localises to the cellular thylakoid membrane. In terms of biological role, light-harvesting photosynthetic bile pigment-protein from the phycobiliprotein complex. Allophycocyanin has a maximum absorption at approximately 650 nanometers. The sequence is that of Allophycocyanin alpha chain (apcA) from Anabaena cylindrica.